An 88-amino-acid chain; its full sequence is Synaptonemal complex central element protein 3 (88 aa).

Residues E7 to K75 are a coiled coil.

Homodimer. Can form higher-order homooligomers. Interacts with SYCP1 (via tetrameric core); the interaction remodels SYCP1 homotetramers to 2:1 heterotrimers with SYCE3. SYCP1/SYCE3 heterotrimers form lattice assemblies as part of the mature synaptonemal complex via both lateral and head-to-head interactions. Interacts with the SYCE1-SIX6OS1 complex; the interaction recruits the SYCE1-SIX6OS1 complex to the central element of the synaptonemal complex. Interacts with the SYCE2-TEX12 complex; the interaction promotes fibrous assembly of SYCE2-TEX12 as part of the synaptonemal complex central element. Interacts with SYCE1. Interacts with SYCE2. Interacts with proteasome subunit PSMA8; to participate in meiosis progression during spermatogenesis. Interacts with SPO16.

The protein resides in the nucleus. Its subcellular location is the chromosome. Major component of the transverse central element of synaptonemal complexes (SCS), formed between homologous chromosomes during meiotic prophase. Required for the assembly of the central element of the synaptonemal complex during meiosis, via remodeling of SYCP1 lattice structures and promoting recruitment of SYCE2-TEX12 and SYCE1-SIX60S1 complexes. Required for chromosome loading of the central element-specific SCS proteins, and for initiating synapsis between homologous chromosomes. Chromosome loading appears to require SYCP1. Required for fertility and normal testis development. This chain is Synaptonemal complex central element protein 3, found in Homo sapiens (Human).